The following is a 110-amino-acid chain: Snake venom vascular endothelial growth factor toxin ICPP (110 aa).

At glutamine 1 the chain carries Pyrrolidone carboxylic acid. 3 disulfides stabilise this stretch: cysteine 14/cysteine 56, cysteine 45/cysteine 91, and cysteine 49/cysteine 93.

In terms of assembly, homodimer; disulfide-linked. Interacts with high affinity with KDR/VEGFR-2, and with a lower affinity with neuropilin-1 (NRP1) and neuropilin-2 (NRP2). In terms of tissue distribution, expressed by the venom gland.

It is found in the secreted. Functionally, snake venom VEGFs may contribute to venom dispersion and prey subjugation by inducing vascular permeability and hypotension. This protein increases vascular permeability and angiogenesis probably through VEGF receptor (KDR/VEGFR-2) signaling. Induces DNA synthesis in human umbilical vein endothelial cells, and promotes mouse embryonic stem cell proliferation and differentiation. It may also induce a drastic hypotensive effect after intravenous injection. The hypotension is mediated by nitric oxide (NO), which is produced by VEGF-activated endothelium NO synthase. This Macrovipera lebetinus (Levantine viper) protein is Snake venom vascular endothelial growth factor toxin ICPP.